A 159-amino-acid chain; its full sequence is Ribosomal RNA large subunit methyltransferase H (159 aa).

Residues leucine 76, glycine 108, and 127-132 (FGKLTL) each bind S-adenosyl-L-methionine.

This sequence belongs to the RNA methyltransferase RlmH family. In terms of assembly, homodimer.

The protein localises to the cytoplasm. It catalyses the reaction pseudouridine(1915) in 23S rRNA + S-adenosyl-L-methionine = N(3)-methylpseudouridine(1915) in 23S rRNA + S-adenosyl-L-homocysteine + H(+). In terms of biological role, specifically methylates the pseudouridine at position 1915 (m3Psi1915) in 23S rRNA. The polypeptide is Ribosomal RNA large subunit methyltransferase H (Latilactobacillus sakei subsp. sakei (strain 23K) (Lactobacillus sakei subsp. sakei)).